The chain runs to 250 residues: UPF0494 membrane protein PB2B2.07c (250 aa).

3 helical membrane passes run 98 to 118 (WPLL…NFEV), 144 to 164 (IAIY…MFPL), and 179 to 199 (MIIA…GATI).

This sequence belongs to the UPF0494 family.

Its subcellular location is the cytoplasm. The protein localises to the endoplasmic reticulum. The protein resides in the golgi apparatus. It localises to the membrane. This chain is UPF0494 membrane protein PB2B2.07c, found in Schizosaccharomyces pombe (strain 972 / ATCC 24843) (Fission yeast).